A 710-amino-acid chain; its full sequence is Methionine--tRNA ligase (710 aa).

A 'HIGH' region motif is present at residues 26–36 (PYANGQIHIGH). 4 residues coordinate Zn(2+): C157, C160, C170, and C173. The 'KMSKS' region motif lies at 347–351 (KMSKS). K350 is an ATP binding site. The tRNA-binding domain occupies 604-710 (DFAKIDLRIA…SGAKPGMRVK (107 aa)).

Belongs to the class-I aminoacyl-tRNA synthetase family. MetG type 1 subfamily. As to quaternary structure, homodimer. Requires Zn(2+) as cofactor.

Its subcellular location is the cytoplasm. The enzyme catalyses tRNA(Met) + L-methionine + ATP = L-methionyl-tRNA(Met) + AMP + diphosphate. Is required not only for elongation of protein synthesis but also for the initiation of all mRNA translation through initiator tRNA(fMet) aminoacylation. In Paraburkholderia xenovorans (strain LB400), this protein is Methionine--tRNA ligase.